The primary structure comprises 118 residues: Small ribosomal subunit protein uS13 (118 aa).

The tract at residues 91–118 (HRRGLPVRGQRTKTNARTRKGPRKPIKK) is disordered.

The protein belongs to the universal ribosomal protein uS13 family. As to quaternary structure, part of the 30S ribosomal subunit. Forms a loose heterodimer with protein S19. Forms two bridges to the 50S subunit in the 70S ribosome.

Functionally, located at the top of the head of the 30S subunit, it contacts several helices of the 16S rRNA. In the 70S ribosome it contacts the 23S rRNA (bridge B1a) and protein L5 of the 50S subunit (bridge B1b), connecting the 2 subunits; these bridges are implicated in subunit movement. Contacts the tRNAs in the A and P-sites. The protein is Small ribosomal subunit protein uS13 of Sodalis glossinidius (strain morsitans).